A 434-amino-acid polypeptide reads, in one-letter code: Histidinol dehydrogenase (434 aa).

Residues Tyr-130, Gln-191, and Asn-214 each coordinate NAD(+). Ser-237, Gln-259, and His-262 together coordinate substrate. Residues Gln-259 and His-262 each coordinate Zn(2+). Residues Glu-327 and His-328 each act as proton acceptor in the active site. Substrate is bound by residues His-328, Asp-361, Glu-415, and His-420. Asp-361 is a binding site for Zn(2+). His-420 is a Zn(2+) binding site.

It belongs to the histidinol dehydrogenase family. The cofactor is Zn(2+).

It carries out the reaction L-histidinol + 2 NAD(+) + H2O = L-histidine + 2 NADH + 3 H(+). The protein operates within amino-acid biosynthesis; L-histidine biosynthesis; L-histidine from 5-phospho-alpha-D-ribose 1-diphosphate: step 9/9. Functionally, catalyzes the sequential NAD-dependent oxidations of L-histidinol to L-histidinaldehyde and then to L-histidine. This chain is Histidinol dehydrogenase, found in Chromobacterium violaceum (strain ATCC 12472 / DSM 30191 / JCM 1249 / CCUG 213 / NBRC 12614 / NCIMB 9131 / NCTC 9757 / MK).